Consider the following 303-residue polypeptide: 34 kDa antigenic protein homolog (303 aa).

Transmembrane regions (helical) follow at residues Ile-42–Leu-62, Thr-77–Pro-97, His-102–Phe-122, and Leu-134–Val-154. Composition is skewed to low complexity over residues Gln-194–Pro-207 and Gly-215–Pro-255. Positions Gln-194–Val-303 are disordered. Positions Ser-256–Val-271 are enriched in pro residues. The segment covering Gly-274 to Tyr-286 has biased composition (polar residues). The segment covering Ser-287–Val-303 has biased composition (low complexity).

The protein to M.paratuberculosis 34 kDa antigenic protein.

It is found in the cell membrane. The sequence is that of 34 kDa antigenic protein homolog from Mycobacterium bovis (strain ATCC BAA-935 / AF2122/97).